A 222-amino-acid polypeptide reads, in one-letter code: Probable transaldolase 2 (222 aa).

K90 (schiff-base intermediate with substrate) is an active-site residue.

Belongs to the transaldolase family. Type 3B subfamily.

It is found in the cytoplasm. The enzyme catalyses D-sedoheptulose 7-phosphate + D-glyceraldehyde 3-phosphate = D-erythrose 4-phosphate + beta-D-fructose 6-phosphate. Its pathway is carbohydrate degradation; pentose phosphate pathway; D-glyceraldehyde 3-phosphate and beta-D-fructose 6-phosphate from D-ribose 5-phosphate and D-xylulose 5-phosphate (non-oxidative stage): step 2/3. Functionally, transaldolase is important for the balance of metabolites in the pentose-phosphate pathway. This chain is Probable transaldolase 2, found in Bacillus anthracis.